A 360-amino-acid chain; its full sequence is Putative F-box protein At3g16210 (360 aa).

The 48-residue stretch at 1-48 (MSKFLPEELAIEILVRLSMKDLARFRCVCKTWRDLINDPGFTETYRDM) folds into the F-box domain.

This chain is Putative F-box protein At3g16210, found in Arabidopsis thaliana (Mouse-ear cress).